The following is a 339-amino-acid chain: Ketol-acid reductoisomerase (NADP(+)) (339 aa).

One can recognise a KARI N-terminal Rossmann domain in the interval 1–182 (MRVYYDRDAD…GGGRSGIIET (182 aa)). Residues 24 to 27 (YGSQ), Lys48, Ser51, Thr53, and 83 to 86 (DELQ) contribute to the NADP(+) site. His108 is a catalytic residue. Gly134 contacts NADP(+). The KARI C-terminal knotted domain occupies 183 to 328 (NFREECETDL…AKLRGMMPWI (146 aa)). Residues Asp191, Glu195, Glu227, and Glu231 each coordinate Mg(2+). Ser252 contributes to the substrate binding site.

Belongs to the ketol-acid reductoisomerase family. Requires Mg(2+) as cofactor.

It carries out the reaction (2R)-2,3-dihydroxy-3-methylbutanoate + NADP(+) = (2S)-2-acetolactate + NADPH + H(+). It catalyses the reaction (2R,3R)-2,3-dihydroxy-3-methylpentanoate + NADP(+) = (S)-2-ethyl-2-hydroxy-3-oxobutanoate + NADPH + H(+). It functions in the pathway amino-acid biosynthesis; L-isoleucine biosynthesis; L-isoleucine from 2-oxobutanoate: step 2/4. It participates in amino-acid biosynthesis; L-valine biosynthesis; L-valine from pyruvate: step 2/4. In terms of biological role, involved in the biosynthesis of branched-chain amino acids (BCAA). Catalyzes an alkyl-migration followed by a ketol-acid reduction of (S)-2-acetolactate (S2AL) to yield (R)-2,3-dihydroxy-isovalerate. In the isomerase reaction, S2AL is rearranged via a Mg-dependent methyl migration to produce 3-hydroxy-3-methyl-2-ketobutyrate (HMKB). In the reductase reaction, this 2-ketoacid undergoes a metal-dependent reduction by NADPH to yield (R)-2,3-dihydroxy-isovalerate. The polypeptide is Ketol-acid reductoisomerase (NADP(+)) (Rhizobium etli (strain ATCC 51251 / DSM 11541 / JCM 21823 / NBRC 15573 / CFN 42)).